The following is a 107-amino-acid chain: Phosphoribosyl-ATP pyrophosphatase (107 aa).

The protein belongs to the PRA-PH family.

It localises to the cytoplasm. The catalysed reaction is 1-(5-phospho-beta-D-ribosyl)-ATP + H2O = 1-(5-phospho-beta-D-ribosyl)-5'-AMP + diphosphate + H(+). It participates in amino-acid biosynthesis; L-histidine biosynthesis; L-histidine from 5-phospho-alpha-D-ribose 1-diphosphate: step 2/9. The sequence is that of Phosphoribosyl-ATP pyrophosphatase from Bacillus cereus (strain Q1).